The chain runs to 45 residues: Large ribosomal subunit protein bL34 (45 aa).

Composition is skewed to basic residues over residues 1-15 (MKAK…RKRA) and 22-45 (MKTK…IAIK). A disordered region spans residues 1–45 (MKAKSHLSNKKRKRASGFLARMKTKAGRKILARRRAKGRKRIAIK).

Belongs to the bacterial ribosomal protein bL34 family.

In Sulfurihydrogenibium sp. (strain YO3AOP1), this protein is Large ribosomal subunit protein bL34.